Reading from the N-terminus, the 445-residue chain is MPSRAEDYEVLYTIGTGSYGRCQKIRRKSDGKILVWKELDYGSMTEAEKQMLVSEVNLLRELKHPNIVRYYDRIIDRTNTTLYIVMEYCEGGDLASVITKGTKERQYLDEEFVLRVMTQLTLALKECHRRSDGGHTVLHRDLKPANVFLDGKQNVKLGDFGLARILNHDTSFAKTFVGTPYYMSPEQMNRMSYNEKSDIWSLGCLLYELCALMPPFTAFSQKELAGKIREGKFRRIPYRYSDELNEIITRMLNLKDYHRPSVEEILENPLIADLVADEQRRNLERRGRQLGEPEKSQDSSPVLSELKLKEIQLQERERALKAREERLEQKEQELCVRERLAEDKLARAENLLKNYSLLKERKFLSLASNPELLNLPSSVIKKKVHFSGESKENIMRSENSESQLTSKSKCKDLKKRLHAAQLRAQALSDIEKNYQLKSRQILGMR.

The Protein kinase domain maps to 8 to 271 (YEVLYTIGTG…VEEILENPLI (264 aa)). Residues 14–22 (IGTGSYGRC) and lysine 37 contribute to the ATP site. Aspartate 141 serves as the catalytic Proton acceptor. Phosphothreonine; by autocatalysis is present on threonine 170. Serine 171 carries the post-translational modification Phosphoserine; by autocatalysis. Phosphothreonine; by autocatalysis is present on residues threonine 175 and threonine 179. At serine 184 the chain carries Phosphoserine. Serine 241 carries the post-translational modification Phosphoserine; by autocatalysis. Residues 264-445 (EILENPLIAD…LKSRQILGMR (182 aa)) are interaction with PCNT. Phosphoserine occurs at positions 296 and 300. The segment at 301–445 (PVLSELKLKE…LKSRQILGMR (145 aa)) is interaction with CEP85. Residues 303–362 (LSELKLKEIQLQERERALKAREERLEQKEQELCVRERLAEDKLARAENLLKNYSLLKERK) are a coiled coil. A leucine-zipper region spans residues 306–334 (LKLKEIQLQERERALKAREERLEQKEQEL). The tract at residues 329–445 (QKEQELCVRE…LKSRQILGMR (117 aa)) is necessary for interaction with MAD1L1. The segment at 333-370 (ELCVRERLAEDKLARAENLLKNYSLLKERKFLSLASNP) is required for microtubule binding and for localization to the centrosomes. A phosphoserine; by STK3/MST2 mark is found at serine 356 and serine 365. 4 positions are modified to phosphoserine: serine 387, serine 390, serine 397, and serine 402. The interaction with SAV1 and STK3/MST2 stretch occupies residues 403–439 (QLTSKSKCKDLKKRLHAAQLRAQALSDIEKNYQLKSR). Position 406 is a phosphoserine; by STK3/MST2 (serine 406). Positions 406–430 (SKSKCKDLKKRLHAAQLRAQALSDI) form a coiled coil. Phosphoserine is present on serine 428. Serine 438 is subject to Phosphoserine; by STK3/MST2.

The protein belongs to the protein kinase superfamily. NEK Ser/Thr protein kinase family. NIMA subfamily. As to quaternary structure, isoform 1, isoform 2 and isoform 4 form homo- and heterodimers. Interacts with NECAB3 and HMGA2. Isoform 1 interacts with CDC20, CTNB1, MAD1L1, MAPK, NEK11, NPM1, NDC80, PCNT and SGO1. Isoform 1 interacts with STK3/MST2 (via SARAH domain) and SAV1 (via SARAH domain). Isoform 1 and isoform 2 interact with MAD2L1. Isoform 1 and isoform 4 interact with PPP1CA and PPP1CC. Interacts with CEP68; the interaction leads to phosphorylation of CEP68. Interacts with CNTLN; the interaction leads to phosphorylation of CNTLN. Isoform 1 interacts with CEP85. Interacts with CCDC102B; the interaction leads to phosphorylation of CCDC102B. The cofactor is Mg(2+). Post-translationally, activated by autophosphorylation. Protein phosphatase 1 represses autophosphorylation and activation of isoform 1 by dephosphorylation. Phosphorylation by STK3/MST2 is necessary for its localization to the centrosome. In terms of tissue distribution, isoform 1 and isoform 2 are expressed in peripheral blood T-cells and a wide variety of transformed cell types. Isoform 1 and isoform 4 are expressed in the testis. Up-regulated in various cancer cell lines, as well as primary breast tumors.

Its subcellular location is the nucleus. The protein localises to the nucleolus. It localises to the cytoplasm. The protein resides in the cytoskeleton. It is found in the microtubule organizing center. Its subcellular location is the centrosome. The protein localises to the spindle pole. It localises to the chromosome. The protein resides in the centromere. It is found in the kinetochore. It carries out the reaction L-seryl-[protein] + ATP = O-phospho-L-seryl-[protein] + ADP + H(+). The catalysed reaction is L-threonyl-[protein] + ATP = O-phospho-L-threonyl-[protein] + ADP + H(+). Its activity is regulated as follows. Isoform 1 is inhibited by ionizing radiation in the presence of PPP1CA. Its catalytic activity is inhibited by the inhibitor CCT241950. In the presence of this inhibitor, displays an autoinhibited conformation: Tyr-70 side chain points into the active site, interacts with the activation loop, and blocks the alphaC helix. In terms of biological role, protein kinase which is involved in the control of centrosome separation and bipolar spindle formation in mitotic cells and chromatin condensation in meiotic cells. Regulates centrosome separation (essential for the formation of bipolar spindles and high-fidelity chromosome separation) by phosphorylating centrosomal proteins such as CROCC, CEP250 and NINL, resulting in their displacement from the centrosomes. Regulates kinetochore microtubule attachment stability in mitosis via phosphorylation of NDC80. Involved in regulation of mitotic checkpoint protein complex via phosphorylation of CDC20 and MAD2L1. Plays an active role in chromatin condensation during the first meiotic division through phosphorylation of HMGA2. Phosphorylates: PPP1CC; SGO1; NECAB3 and NPM1. Essential for localization of MAD2L1 to kinetochore and MAPK1 and NPM1 to the centrosome. Phosphorylates CEP68 and CNTLN directly or indirectly. NEK2-mediated phosphorylation of CEP68 promotes CEP68 dissociation from the centrosome and its degradation at the onset of mitosis. Involved in the regulation of centrosome disjunction. Phosphorylates CCDC102B either directly or indirectly which causes CCDC102B to dissociate from the centrosome and allows for centrosome separation. Functionally, phosphorylates and activates NEK11 in G1/S-arrested cells. Not present in the nucleolus and, in contrast to isoform 1, does not phosphorylate and activate NEK11 in G1/S-arrested cells. This chain is Serine/threonine-protein kinase Nek2 (NEK2), found in Homo sapiens (Human).